We begin with the raw amino-acid sequence, 66 residues long: Large ribosomal subunit protein bL33c (66 aa).

Belongs to the bacterial ribosomal protein bL33 family.

It is found in the plastid. The protein localises to the chloroplast. The chain is Large ribosomal subunit protein bL33c from Lepidium virginicum (Virginia pepperweed).